The following is a 309-amino-acid chain: Probable lipid kinase YegS-like (309 aa).

The DAGKc domain occupies methionine 1–tyrosine 133. ATP is bound by residues serine 39, glycine 65 to glutamate 71, and threonine 95. Mg(2+)-binding residues include leucine 214, aspartate 217, and leucine 219. Glutamate 273 (proton acceptor) is an active-site residue.

It belongs to the diacylglycerol/lipid kinase family. YegS lipid kinase subfamily. Mg(2+) is required as a cofactor. Ca(2+) serves as cofactor.

The protein resides in the cytoplasm. Its function is as follows. Probably phosphorylates lipids; the in vivo substrate is unknown. This is Probable lipid kinase YegS-like from Shewanella frigidimarina (strain NCIMB 400).